Here is an 899-residue protein sequence, read N- to C-terminus: Origin recognition complex subunit 5 (899 aa).

Disordered regions lie at residues 27–47, 100–166, and 194–238; these read FSSPKKSRKESPIFVQNNDDT, DRIN…EYKD, and KNLE…DGNL. Residues 105–160 show a composition bias toward acidic residues; it reads SEEETNINDDNNDDNNGDYDDDNNSDDDDDNDDNNNNDDNNNDDDEDVDDFEDIKE. Positions 207–218 are enriched in low complexity; it reads SSDNSMTSSSEE. A compositionally biased stretch (basic and acidic residues) spans 227 to 237; sequence ESDKESDKDGN. Residue 303–310 coordinates ATP; the sequence is GLPGMGKT. The segment at 409–469 is disordered; it reads KRTTENIRSP…NNNSNNVRFN (61 aa). Low complexity predominate over residues 455-469; it reads KNNFNNNNSNNVRFN.

This sequence belongs to the ORC5 family. In terms of assembly, component of the origin recognition complex (ORC). Interacts with PCNA1; the interaction occurs during the trophozoite stage but not at the late schizont stage.

The protein localises to the nucleus. It carries out the reaction ATP + H2O = ADP + phosphate + H(+). Its function is as follows. Component of the origin recognition complex (ORC) that binds origins of replication. The sequence is that of Origin recognition complex subunit 5 from Plasmodium falciparum (isolate 3D7).